Consider the following 54-residue polypeptide: Potassium channel toxin alpha-KTx 14.5 (54 aa).

The signal sequence occupies residues 1 to 23 (MKIFFAILLILAVCSMAIWTVNG). 3 disulfides stabilise this stretch: Cys-30–Cys-46, Cys-36–Cys-51, and Cys-40–Cys-53.

This sequence belongs to the short scorpion toxin superfamily. Potassium channel inhibitor family. Alpha-KTx 14 subfamily. As to expression, expressed by the venom gland.

The protein resides in the secreted. Functionally, inhibits potassium channels. May be active towards small conductance calcium-activated potassium channels (KCNN, SK), and less active towards voltage-gated potassium channels (Kv/KCN). In Mesobuthus gibbosus (Mediterranean checkered scorpion), this protein is Potassium channel toxin alpha-KTx 14.5.